The following is a 371-amino-acid chain: MLYFLYDWLSRGGHEHVPVLNLLKYLTFRTGMSMLTAYVVAVAMGSRFIRWMKAKQGKGQPIRADGIARHVVEKAGTPTMGGFMILAGLFVGSLLFADLKNVHVWVVLGITGSFGVLGFMDDYAKVTKQTTAGLSSSQKLIAQFIISILAAVVLIIFAPKSPTTVGLETSVVFPILKNLVINLGWFYVAFAAITIAGFSNAVNLTDGLDGLAIVPVMFAASTFGLIAYLVGNVKFADYLNLHYVPSVGELAVVCGAIIGGGMGFLWYNAPPAKIFMGDTGSLALGGALGSIAVCAKHELVLGIVGGLFVAEALSVMIQVAYFKKTGKRIFLMAPIHHHFEKLGWAESTVVIRFWIVAMMLSFVGLATLKLR.

The next 10 helical transmembrane spans lie at 25 to 45 (YLTF…VAMG), 79 to 99 (TMGG…FADL), 104 to 124 (VWVV…DDYA), 139 to 159 (KLIA…IFAP), 179 to 199 (LVIN…AGFS), 210 to 230 (GLAI…AYLV), 247 to 267 (VGEL…FLWY), 274 to 294 (IFMG…IAVC), 299 to 319 (LVLG…MIQV), and 348 to 368 (TVVI…LATL).

Belongs to the glycosyltransferase 4 family. MraY subfamily. Mg(2+) is required as a cofactor.

It is found in the cell inner membrane. The enzyme catalyses UDP-N-acetyl-alpha-D-muramoyl-L-alanyl-gamma-D-glutamyl-meso-2,6-diaminopimeloyl-D-alanyl-D-alanine + di-trans,octa-cis-undecaprenyl phosphate = di-trans,octa-cis-undecaprenyl diphospho-N-acetyl-alpha-D-muramoyl-L-alanyl-D-glutamyl-meso-2,6-diaminopimeloyl-D-alanyl-D-alanine + UMP. Its pathway is cell wall biogenesis; peptidoglycan biosynthesis. Catalyzes the initial step of the lipid cycle reactions in the biosynthesis of the cell wall peptidoglycan: transfers peptidoglycan precursor phospho-MurNAc-pentapeptide from UDP-MurNAc-pentapeptide onto the lipid carrier undecaprenyl phosphate, yielding undecaprenyl-pyrophosphoryl-MurNAc-pentapeptide, known as lipid I. In Caulobacter sp. (strain K31), this protein is Phospho-N-acetylmuramoyl-pentapeptide-transferase.